The chain runs to 519 residues: Major facilitator superfamily domain-containing protein 8 (519 aa).

The interval 1-25 (MANLGSEAEREPLLGPGSPGSREWS) is disordered. Residues 1–41 (MANLGSEAEREPLLGPGSPGSREWSEIETQEHYKSRWKSVR) are Cytoplasmic-facing. The short motif at 13–14 (LL) is the Dileucine internalization motif element. Residues 42–62 (ILYLTMFLSSVGFSIVIMSIW) form a helical membrane-spanning segment. The Extracellular portion of the chain corresponds to 63 to 75 (PYLQKIDQTADAS). A helical membrane pass occupies residues 76-96 (FLGWVIASYSLGQMVASPLFG). Residues 97 to 106 (LWSNYRPRKE) lie on the Cytoplasmic side of the membrane. The chain crosses the membrane as a helical span at residues 107–127 (PLIVSISISVAANCLYAYVHV). Topologically, residues 128–140 (PAAHNKYYMLIAR) are extracellular. A helical transmembrane segment spans residues 141 to 161 (GLVGFGAGNVAVVRSYIAGAT). Residues 162-174 (SLQERTNAMANTS) are Cytoplasmic-facing. Residues 175–195 (TCQALGFILGPVFQTCFALIG) form a helical membrane-spanning segment. Topologically, residues 196-212 (EKGVTWDIIKLQVNMYT) are extracellular. A helical membrane pass occupies residues 213–233 (APVLLAAFLGILNIILILFIL). Residues 234–267 (REHRVDDLGRQCKSVNFQEENTDEPQIPEGSIDQ) are Cytoplasmic-facing. A helical transmembrane segment spans residues 268 to 288 (VAVVATNIVFFVVLFIFAVYE). The Extracellular portion of the chain corresponds to 289-310 (TILTPLTLDMYAWTQEQAVLYD). A helical transmembrane segment spans residues 311–331 (GILLVAFGVEAVLVFMGVKLL). Residues 332-338 (SKKIGER) are Cytoplasmic-facing. The chain crosses the membrane as a helical span at residues 339–359 (AILLGGFVVVWVGFFILLPWG). Over 360–416 (NQFPKIQWEDLHNSSTPNTTFGEIIIGLWNSSREDHSEQPTGCPIEQTWCLYTPVIH) the chain is Extracellular. Asn-372 and Asn-377 each carry an N-linked (GlcNAc...) asparagine glycan. Residues 417-439 (LAQFLTAAVLIGTGYPACSVMSY) form a helical membrane-spanning segment. Topologically, residues 440-452 (TLYSKVLGPKPQG) are cytoplasmic. Residues 453–473 (IYMGWLTTSGSAARILGPVFI) form a helical membrane-spanning segment. At 474-483 (SHVYTYLGPR) the chain is on the extracellular side. Residues 484–504 (WAFSLVCGIVVLTILLIGAVY) traverse the membrane as a helical segment. The Cytoplasmic segment spans residues 505 to 519 (KRLVAFSVRYMRIQE).

The protein belongs to the major facilitator superfamily.

The protein resides in the endosome membrane. Its subcellular location is the lysosome membrane. It catalyses the reaction chloride(in) = chloride(out). It carries out the reaction iodide(out) = iodide(in). The catalysed reaction is fluoride(in) = fluoride(out). In terms of biological role, outward-rectifying chloride channel involved in endolysosomal chloride homeostasis, membrane fusion and function. Conducts chloride currents up to hundreds of picoamperes. Regulates lysosomal calcium content by reducing the lysosomal membrane potential, thereby activating TRPML1 channel and further release of lysosomal calcium ions. Regulates the pH in endolysosomal compartments and may contribute to progressive acidification from endosome to lysosome. Permeable to other halides such as iodide and fluoride ions. The sequence is that of Major facilitator superfamily domain-containing protein 8 from Mus musculus (Mouse).